The sequence spans 317 residues: Transaldolase (317 aa).

Lys-132 functions as the Schiff-base intermediate with substrate in the catalytic mechanism.

The protein belongs to the transaldolase family. Type 1 subfamily. As to quaternary structure, homodimer.

The protein localises to the cytoplasm. It carries out the reaction D-sedoheptulose 7-phosphate + D-glyceraldehyde 3-phosphate = D-erythrose 4-phosphate + beta-D-fructose 6-phosphate. It functions in the pathway carbohydrate degradation; pentose phosphate pathway; D-glyceraldehyde 3-phosphate and beta-D-fructose 6-phosphate from D-ribose 5-phosphate and D-xylulose 5-phosphate (non-oxidative stage): step 2/3. In terms of biological role, transaldolase is important for the balance of metabolites in the pentose-phosphate pathway. This is Transaldolase from Yersinia pseudotuberculosis serotype IB (strain PB1/+).